A 299-amino-acid polypeptide reads, in one-letter code: YjeF N-terminal domain-containing protein 3 (299 aa).

Positions 74-287 constitute a YjeF N-terminal domain; the sequence is AAALERELLE…DVRRKFALRL (214 aa).

Interacts with APOA1. Binds to HDL. In terms of tissue distribution, expressed in theca cells in ovary and in Leydig cells in testis (at protein level). Also expressed in brain and mammary gland.

Its function is as follows. May accelerate cholesterol efflux from endothelial cells to high-density lipoprotein (HDL) and thereby regulates angiogenesis. May orchestrate hematopoietic stem and progenitor cell emergence from the hemogenic endothelium, a type of specialized endothelium manifesting hematopoietic potential. YJEFN3-mediated cholesterol efflux activates endothelial SREBF2, the master transcription factor for cholesterol biosynthesis, which in turn transactivates NOTCH and promotes hematopoietic stem and progenitor cell emergence. May play a role in spermiogenesis and oogenesis. In Homo sapiens (Human), this protein is YjeF N-terminal domain-containing protein 3 (YJEFN3).